We begin with the raw amino-acid sequence, 991 residues long: Collagenase ColT (991 aa).

Residues 1–28 (MKKKFIKMLCSIAIGCMISTSYSIKVSA) form the signal peptide. The propeptide occupies 29-52 (FSNGNTKTNPNGEFKSLSLNSTNP). The interval 53-727 (YKTKYSFNDL…VYDIVFHGLL (675 aa)) is S1 metalloprotease domain, degrades FALGPA (furylacryloyl-Leu-Gly-Pro-Ala). The segment at 57 to 330 (YSFNDLNKLS…AIEAIKEDFN (274 aa)) is activator domain. Residues 340–611 (DINKLIEEGK…MENLVNNYDN (272 aa)) form a catalytic subdomain region. Position 440 (E440) interacts with Ca(2+). Residue H465 coordinates Zn(2+). The active site involves E466. A Zn(2+)-binding site is contributed by H469. The Ca(2+) site is built by G473, I477, and G479. A Zn(2+)-binding site is contributed by E499. Positions 619–731 (DDYMKQYDNK…VFHGLLSHNK (113 aa)) are helper subdomain. 2 collagen-binding domain regions span residues 755-870 (IYEK…NISD) and 878-991 (IKKI…VIIN). Positions 757, 759, 761, 784, 787, 883, 885, 887, 888, 910, and 913 each coordinate Ca(2+).

This sequence belongs to the peptidase M9B family. Collagenase subfamily. It depends on Ca(2+) as a cofactor. The cofactor is Zn(2+).

It is found in the secreted. The enzyme catalyses Digestion of native collagen in the triple helical region at Xaa-|-Gly bonds. With synthetic peptides, a preference is shown for Gly at P3 and P1', Pro and Ala at P2 and P2', and hydroxyproline, Ala or Arg at P3'.. Partially inhibited by 1-10-phenanthroline; inactivation is irreversible. Partially inhibited by EDTA; inactivation is reversible. Inhibited by broad-spectrum zinc metalloprotease inhibitor batimastat. N-aryl mercaptoacetamide-based inhibitors have been isolated that act on clostridial collagenases with submicromolar affinity while having negligibile activity on human collagenases. In terms of biological role, clostridial collagenases are among the most efficient degraders of eukaryotic collagen known; saprophytes use collagen as a carbon source while pathogens additionally digest collagen to aid in host colonization. Has both tripeptidylcarboxypeptidase on Gly-X-Y and endopeptidase activities; the endopeptidase cuts within the triple helix region of collagen while tripeptidylcarboxypeptidase successively digests the exposed ends, thus clostridial collagenases can digest large sections of collagen. The activator domain (residues 57-330) and catalytic subdomain (340-611) open and close around substrate allowing digestion when the protein is closed. The polypeptide is Collagenase ColT (Clostridium tetani (strain Massachusetts / E88)).